Here is a 290-residue protein sequence, read N- to C-terminus: Thymidylate synthase (290 aa).

DUMP contacts are provided by residues arginine 27 and 152-153 (RR). The active-site Nucleophile is cysteine 172. Residues 192–195 (RSAD), asparagine 203, and 233–235 (HVY) each bind dUMP. Aspartate 195 is a (6R)-5,10-methylene-5,6,7,8-tetrahydrofolate binding site. Residue alanine 289 coordinates (6R)-5,10-methylene-5,6,7,8-tetrahydrofolate.

The protein belongs to the thymidylate synthase family. Homodimer.

It catalyses the reaction dUMP + (6R)-5,10-methylene-5,6,7,8-tetrahydrofolate = 7,8-dihydrofolate + dTMP. It functions in the pathway pyrimidine metabolism; dTTP biosynthesis. The protein is Thymidylate synthase (TS) of Ateles.